We begin with the raw amino-acid sequence, 258 residues long: MAGSPLLCGPRAGGVGILVLLLLGLLRLPPTLSARPVKEPRSLSAASAPLVETSTPLRLRRAVPRGEAAGAVQELARALAHLLEAERQERARAEAQEAEDQQARVLAQLLRAWGSPRASDPPLAPDDDPDAPAAQLARALLRARLDPAALAAQLVPAPAAAPRPRPPVYDDGPTGPDVEDAGDETPDVDPELLRYLLGRILTGSSEPEAAPAPRRLRRSVDQDLGPEVPPENVLGALLRVKRLENPSPQAPARRLLPP.

Positions M1–S33 are cleaved as a signal peptide. A proSAAS(1-180) region spans residues A34–P213. Disordered regions lie at residues P156–V188, S204–P230, and R239–P258. Acidic residues predominate over residues D177–V188. Low complexity predominate over residues S204–P213. A C-terminal inhibitory domain; interacts with PCSK1 region spans residues S219 to P258. Positions L237 to R242 match the Sufficient for inhibition of PCSK1 motif.

As to quaternary structure, interacts via the C-terminal inhibitory domain with PCSK1 66 kDa form. Proteolytically cleaved in the Golgi. Little SAAS, PEN, PEN-20 and Big LEN are the major processed peptides in proSAAS-overexpressing AtT-20 pituitary corticotropic cell line. Expressed in brain (mostly hypothalamus and pituitary) and gut. Expressed in trigeminal ganglia and neuroendocrine cell lines. As to expression, expressed in pancreas, spinal cord and brain (most abundant in striatum, hippocampus, pons and medulla, and cortex) (at protein level).

It is found in the secreted. Its subcellular location is the golgi apparatus. It localises to the trans-Golgi network. In terms of biological role, may function in the control of the neuroendocrine secretory pathway. Proposed be a specific endogenous inhibitor of PCSK1. ProSAAS and Big PEN-LEN, both containing the C-terminal inhibitory domain, but not the processed peptides reduce PCSK1 activity in the endoplasmic reticulum and Golgi. It reduces the activity of the 87 kDa form but not the autocatalytically derived 66 kDa form of PCSK1. Subsequent processing of proSAAS may eliminate the inhibition. Slows down convertase-mediated processing of proopiomelanocortin and proenkephalin. May control the intracellular timing of PCSK1 rather than its total level of activity. Its function is as follows. Endogenous ligand for GPR171. Neuropeptide involved in the regulation of feeding. Functionally, endogenous ligand for GPR171. Neuropeptide involved in the regulation of feeding. This is ProSAAS (Pcsk1n) from Mus musculus (Mouse).